The chain runs to 785 residues: DNA ligase (785 aa).

Residues 32-36 (DAEYD), 81-82 (SL), and glutamate 121 contribute to the NAD(+) site. Catalysis depends on lysine 123, which acts as the N6-AMP-lysine intermediate. Positions 144, 181, 294, and 318 each coordinate NAD(+). Residues cysteine 412, cysteine 415, cysteine 442, and cysteine 448 each coordinate Zn(2+). Residues 702–785 (VEGLPEAGHT…AFLAKHNIPV (84 aa)) enclose the BRCT domain.

The protein belongs to the NAD-dependent DNA ligase family. LigA subfamily. Mg(2+) is required as a cofactor. The cofactor is Mn(2+).

It catalyses the reaction NAD(+) + (deoxyribonucleotide)n-3'-hydroxyl + 5'-phospho-(deoxyribonucleotide)m = (deoxyribonucleotide)n+m + AMP + beta-nicotinamide D-nucleotide.. Its function is as follows. DNA ligase that catalyzes the formation of phosphodiester linkages between 5'-phosphoryl and 3'-hydroxyl groups in double-stranded DNA using NAD as a coenzyme and as the energy source for the reaction. It is essential for DNA replication and repair of damaged DNA. In Pseudomonas fluorescens (strain SBW25), this protein is DNA ligase.